A 648-amino-acid polypeptide reads, in one-letter code: Serine/arginine repetitive matrix protein 3 (648 aa).

Positions 1–44 are disordered; sequence MSSTVNNGATGMPAPPDAANGFPQPGASSGSWPRAEEELRAAEP. Residues 55 to 98 form the CWF21 domain; it reads LDHERKRRVELKCMELQEMMEEQGYSEEEIRQKVGTFRQMLMEK. Positions 99 to 109 are enriched in basic and acidic residues; sequence EGVLTREDRPG. Disordered stretches follow at residues 99-139 and 154-648; these read EGVL…DGPV and YRTK…SGGF. Basic residues-rich tracts occupy residues 168–186, 199–211, and 219–243; these read PKKK…KKRR, LRKK…KHRR, and RRKR…RKRP. 2 stretches are compositionally biased toward low complexity: residues 257–276 and 289–317; these read SASS…GSPS and TGSQ…NGGS. Basic residues predominate over residues 381-409; the sequence is ARRRRRRRRRRRSRSSANAPRRRGRRRTK. Composition is skewed to low complexity over residues 414-428, 461-471, and 493-502; these read RGSS…SSSD, RPASTSPSPGT, and SWSSSRSPSK. Positions 525–544 are enriched in basic and acidic residues; sequence LGRDKDSEGRARHAEAEAAR. A compositionally biased stretch (basic residues) spans 545–560; that stretch reads TRRRSRSYSPIRKRRR. A compositionally biased stretch (low complexity) spans 579–648; sequence IPYYRPSPSS…SRSSSESGGF (70 aa).

Belongs to the CWC21 family.

May play a role in regulating breast cancer cell invasiveness. May be involved in RYBP-mediated breast cancer progression. The sequence is that of Serine/arginine repetitive matrix protein 3 (Srrm3) from Mus musculus (Mouse).